The sequence spans 316 residues: Annexin D7 (316 aa).

Residue alanine 2 is modified to N-acetylalanine. Annexin repeat units lie at residues 11–82 (PLPE…LWTF), 83–154 (EPAE…PLVS), 166–237 (TLAR…AVIK), and 241–312 (YPEK…ALLG). The Ca(2+) site is built by phenylalanine 24, glycine 26, glycine 28, and glutamate 68. Serine 95 is modified (phosphoserine). A phosphothreonine mark is found at threonine 100 and threonine 112. Phosphotyrosine is present on tyrosine 129. Residues isoleucine 254 and glycine 258 each contribute to the Ca(2+) site. Tyrosine 283 is modified (phosphotyrosine). Serine 288 carries the post-translational modification Phosphoserine. The Ca(2+) site is built by aspartate 298, threonine 299, and glutamate 304.

It belongs to the annexin (TC 1.A.31.1) family. As to expression, expressed in flowers.

This is Annexin D7 (ANNAT7) from Arabidopsis thaliana (Mouse-ear cress).